The following is a 154-amino-acid chain: MNDKAKSILDIRQILGLLPHRYPFLLVDRVLDYTPGECITAVKNVTMNEPFFQGHFPDVPVMPGVLIMEALAQAGGILVVKSTDTSVEGKLFLFTGMERVRFRKPVYPGDRLELHCRLLRHKLKLWKMEGKAYVDGQLAAEAEMTAAVMNREDM.

His55 is an active-site residue.

This sequence belongs to the thioester dehydratase family. FabZ subfamily.

The protein localises to the cytoplasm. It carries out the reaction a (3R)-hydroxyacyl-[ACP] = a (2E)-enoyl-[ACP] + H2O. Involved in unsaturated fatty acids biosynthesis. Catalyzes the dehydration of short chain beta-hydroxyacyl-ACPs and long chain saturated and unsaturated beta-hydroxyacyl-ACPs. This Oleidesulfovibrio alaskensis (strain ATCC BAA-1058 / DSM 17464 / G20) (Desulfovibrio alaskensis) protein is 3-hydroxyacyl-[acyl-carrier-protein] dehydratase FabZ.